A 358-amino-acid chain; its full sequence is Microbial Terpene synthase-like protein 13 (358 aa).

The protein belongs to the terpene synthase family.

Its function is as follows. No terpene synthase activity detected in vitro. This Selaginella moellendorffii (Spikemoss) protein is Microbial Terpene synthase-like protein 13.